The following is a 590-amino-acid chain: 2-isopropylmalate synthase (590 aa).

One can recognise a Pyruvate carboxyltransferase domain in the interval 40 to 314 (PRWCAVDLRD…DPQIDFSDID (275 aa)). 4 residues coordinate Mg(2+): Asp49, His253, His255, and Asn289. Positions 456–590 (APETESDAKW…SSVPAELAGV (135 aa)) are regulatory domain.

Belongs to the alpha-IPM synthase/homocitrate synthase family. LeuA type 2 subfamily. In terms of assembly, homodimer. Mg(2+) serves as cofactor.

Its subcellular location is the cytoplasm. It catalyses the reaction 3-methyl-2-oxobutanoate + acetyl-CoA + H2O = (2S)-2-isopropylmalate + CoA + H(+). It functions in the pathway amino-acid biosynthesis; L-leucine biosynthesis; L-leucine from 3-methyl-2-oxobutanoate: step 1/4. Its function is as follows. Catalyzes the condensation of the acetyl group of acetyl-CoA with 3-methyl-2-oxobutanoate (2-ketoisovalerate) to form 3-carboxy-3-hydroxy-4-methylpentanoate (2-isopropylmalate). This chain is 2-isopropylmalate synthase, found in Leifsonia xyli subsp. xyli (strain CTCB07).